An 84-amino-acid chain; its full sequence is Large ribosomal subunit protein bL27 (84 aa).

The disordered stretch occupies residues 1–20 (MAHKKAGGSTRNGRDSHSKR).

Belongs to the bacterial ribosomal protein bL27 family.

In Blochmanniella pennsylvanica (strain BPEN), this protein is Large ribosomal subunit protein bL27.